A 695-amino-acid polypeptide reads, in one-letter code: DNA topoisomerase 4 subunit B (695 aa).

The tract at residues 1–53 (MSSSDKIPSLFGDDDALAPVPAAPFKASVEPRVEPTPRPIPPPPPSKTASAPG) is disordered. The span at 36-46 (TPRPIPPPPPS) shows a compositional bias: pro residues. ATP is bound by residues Y55, N95, D122, 164–170 (GLHGVGA), and K397. In terms of domain architecture, Toprim spans 477 to 591 (AELFIVEGDS…GGHLFLALPP (115 aa)). Residues E483, D556, and D558 each contribute to the Mg(2+) site.

The protein belongs to the type II topoisomerase family. ParE type 1 subfamily. In terms of assembly, heterotetramer composed of ParC and ParE. Requires Mg(2+) as cofactor. It depends on Mn(2+) as a cofactor. Ca(2+) serves as cofactor.

The catalysed reaction is ATP-dependent breakage, passage and rejoining of double-stranded DNA.. Its function is as follows. Topoisomerase IV is essential for chromosome segregation. It relaxes supercoiled DNA. Performs the decatenation events required during the replication of a circular DNA molecule. In Caulobacter vibrioides (strain ATCC 19089 / CIP 103742 / CB 15) (Caulobacter crescentus), this protein is DNA topoisomerase 4 subunit B.